Here is a 401-residue protein sequence, read N- to C-terminus: Carbamoyl phosphate synthase small chain (401 aa).

Residues 1–203 form a CPSase region; the sequence is MTATPAWTIQ…EGYSTLGETD (203 aa). Residues Ser56, Gly255, and Gly257 each contribute to the L-glutamine site. A Glutamine amidotransferase type-1 domain is found at 207-395; sequence HVVALDYGVK…LNLIREKKGE (189 aa). Cys284 serves as the catalytic Nucleophile. L-glutamine is bound by residues Leu285, Gln288, Asn326, Gly328, and Phe329. Residues His368 and Glu370 contribute to the active site.

Belongs to the CarA family. Composed of two chains; the small (or glutamine) chain promotes the hydrolysis of glutamine to ammonia, which is used by the large (or ammonia) chain to synthesize carbamoyl phosphate. Tetramer of heterodimers (alpha,beta)4.

The catalysed reaction is hydrogencarbonate + L-glutamine + 2 ATP + H2O = carbamoyl phosphate + L-glutamate + 2 ADP + phosphate + 2 H(+). It catalyses the reaction L-glutamine + H2O = L-glutamate + NH4(+). It functions in the pathway amino-acid biosynthesis; L-arginine biosynthesis; carbamoyl phosphate from bicarbonate: step 1/1. Its pathway is pyrimidine metabolism; UMP biosynthesis via de novo pathway; (S)-dihydroorotate from bicarbonate: step 1/3. Functionally, small subunit of the glutamine-dependent carbamoyl phosphate synthetase (CPSase). CPSase catalyzes the formation of carbamoyl phosphate from the ammonia moiety of glutamine, carbonate, and phosphate donated by ATP, constituting the first step of 2 biosynthetic pathways, one leading to arginine and/or urea and the other to pyrimidine nucleotides. The small subunit (glutamine amidotransferase) binds and cleaves glutamine to supply the large subunit with the substrate ammonia. The chain is Carbamoyl phosphate synthase small chain from Rhizobium meliloti (strain 1021) (Ensifer meliloti).